The primary structure comprises 200 residues: dITP/XTP pyrophosphatase (200 aa).

8 to 13 (TRNAGK) is a binding site for substrate. Asp72 (proton acceptor) is an active-site residue. Residue Asp72 coordinates Mg(2+). Residues Ser73, 155 to 158 (FGYD), Lys178, and 183 to 184 (HR) each bind substrate.

It belongs to the HAM1 NTPase family. In terms of assembly, homodimer. Requires Mg(2+) as cofactor.

It carries out the reaction XTP + H2O = XMP + diphosphate + H(+). The catalysed reaction is dITP + H2O = dIMP + diphosphate + H(+). The enzyme catalyses ITP + H2O = IMP + diphosphate + H(+). Pyrophosphatase that catalyzes the hydrolysis of nucleoside triphosphates to their monophosphate derivatives, with a high preference for the non-canonical purine nucleotides XTP (xanthosine triphosphate), dITP (deoxyinosine triphosphate) and ITP. Seems to function as a house-cleaning enzyme that removes non-canonical purine nucleotides from the nucleotide pool, thus preventing their incorporation into DNA/RNA and avoiding chromosomal lesions. The chain is dITP/XTP pyrophosphatase from Streptomyces avermitilis (strain ATCC 31267 / DSM 46492 / JCM 5070 / NBRC 14893 / NCIMB 12804 / NRRL 8165 / MA-4680).